The primary structure comprises 57 residues: Sperm histone (57 aa).

The disordered stretch occupies residues 1–57; it reads MARYRRTRTRSRSRRRRRSRRRRSSRRRRYGRSRRSYRSVGRRRRRYGRRRRRRRRY. Thr9 is modified (phosphothreonine).

The protein belongs to the protamine P1 family. Testis.

The protein localises to the nucleus. It localises to the chromosome. Protamines substitute for histones in the chromatin of sperm during the haploid phase of spermatogenesis. They compact sperm DNA into a highly condensed, stable and inactive complex. The sequence is that of Sperm histone from Coturnix japonica (Japanese quail).